A 409-amino-acid polypeptide reads, in one-letter code: MSHPEAPITPEVEADLAIARRGCDELLVESEFARKLACSRATGVPLRIKLGLDPTAPDIHLGHTVVLNKMRQLQDLGHNVIFLIGDFTSTIGDPSGRNSTRPPLTREQIETNAKTYYAQASLVLDPARTEIRYNSEWCDPLGARGMIQLASRYTVARMMEREDFTRRFKGGVPIAVHEFLYPLLQGYDSVALKADLELGGTDQKFNLLVGRELQKEYGQEQQCILTMPLLVGTDGVEKMSKSKGNYIGISEAPESMFGKLMSISDTLMWRYYELLSFRSLADIAALKAEIDGGRNPRDAKVALAQEIVARFHSPQAAEAALAAFEARFRDGAIPEDMPEVTVGGAPQGILRILREAGLVASGSEAQRNVEQGGVRVNGDRVEDKSLQLSAGTYVVQVGKRKFARVKLVG.

Residues 54–63 (PTAPDIHLGH) carry the 'HIGH' region motif. The 'KMSKS' region signature appears at 238 to 242 (KMSKS). Lysine 241 provides a ligand contact to ATP. Residues 347 to 407 (QGILRILREA…GKRKFARVKL (61 aa)) enclose the S4 RNA-binding domain.

It belongs to the class-I aminoacyl-tRNA synthetase family. TyrS type 2 subfamily. In terms of assembly, homodimer.

It is found in the cytoplasm. The catalysed reaction is tRNA(Tyr) + L-tyrosine + ATP = L-tyrosyl-tRNA(Tyr) + AMP + diphosphate + H(+). In terms of biological role, catalyzes the attachment of tyrosine to tRNA(Tyr) in a two-step reaction: tyrosine is first activated by ATP to form Tyr-AMP and then transferred to the acceptor end of tRNA(Tyr). The chain is Tyrosine--tRNA ligase from Bordetella bronchiseptica (strain ATCC BAA-588 / NCTC 13252 / RB50) (Alcaligenes bronchisepticus).